A 345-amino-acid polypeptide reads, in one-letter code: MVDNQGPLAKDVSLANPPSDSISELSWSPVANHLAMSSWDQTVRIYDVSQSGNGEGQALFNFPAPVLSCTFSPDGAKVLGGATDGSARLMDLVAGKEAQQVAAHDAPVRCVRFFGNPGVRDPIAVTGSWDQTVKYWDLRQDRPLATLQCQERVYAMDLCQNLLVVATAGRLVHVVQLSNADQIYKTVTSPLKHQTRTVTCIPDASGFAIGSTEGRTGFHYVDESKSSLNFTFRCHREMAASKNTQNVYAVNDVSFHPKYYTFSTAGADGTFAFWDKDAHHRLKSFPSVGAPITSTGFNHDGTIFAYAVSYDWSKGFRYNTPEHPTRVVCHPVDDVDCRPKNPVKR.

WD repeat units lie at residues 15–49, 59–100, 101–146, and 250–284; these read ANPPSDSISELSWSPVANHLAMSSWDQTVRIYDVS, LFNF…EAQQ, VAAH…PLAT, and VNDVSFHPKYYTFSTAGADGTFAFWDKDAHHRLKS.

The protein belongs to the WD repeat rae1 family.

The protein operates within secondary metabolite biosynthesis. In terms of biological role, WD40 repeat protein; part of the gene cluster that mediates the biosynthesis of oxaleimides, cytotoxic compounds containing an unusual disubstituted succinimide moiety. The first step of the pathway is provided by the HR-PKS poxF that serves in a new mode of collaborative biosynthesis with the PKS-NRPS poxE, by providing the olefin containing amino acid substrate via the synthesis of an ACP-bound dec-4-enoate. The cytochrome P450 monooxygenase poxM-catalyzed oxidation at the alpha-position creates the enzyme-bound 2-hydroxydec-4-enoyl-ACP thioester, which may be prone to spontaneous hydrolysis to yield 2-hydroxydec-4-enoic acid due to increased electrophilicity of the carbonyl. 2-hydroxydec-4-enoic acid can then be further oxidized by poxM to yield the alpha-ketoacid 2-oxodec-4-enoicacid, which is reductively aminated by the aminotransferase poxL to yield (S,E)-2-aminodec-4-enoic acid. The Hybrid PKS-NRPS synthetase poxE then performs condensation between the octaketide product of its PKS modules and the amino group of (S,E)-2-aminodec-4-enoic acid which is activated and incorporated by the adenylation domain. The resulting aminoacyl product can be cyclized by the Diels-Alderase PoxQ and reductively released by the reductive (R) domain of poxE to yield an aldehyde intermediate. The released aldehyde is then substrate for a Knoevenagel condensation by the hydrolyase poxO followed by an oxidation at the 5-position of the pyrrolidone ring. The presence of the olefin from the amino acid building block allows for migration of the substituted allyl group to occur. This allylic transposition reaction takes place in a conjugate addition, semipinacol-like fashion to yield a succinimide intermediate. Iterative two-electron oxidations of the C7 methyl of the succinimide intermediate to the carboxylic acid can be catalyzed by one of two remaining cytochrome P450 monooxygenasess poxC or poxD to yield oxaleimide A. Subsequent oxidation yields the maleimide scaffold oxaleimide I. Both oxaleimide A and oxaleimide I can undergo oxidative modifications in the decalin ring to yield the series of products oxaleimides B to H. This chain is WD40 repeat protein poxJ, found in Penicillium oxalicum (strain 114-2 / CGMCC 5302) (Penicillium decumbens).